Consider the following 167-residue polypeptide: Protein-export protein SecB (167 aa).

The protein belongs to the SecB family. In terms of assembly, homotetramer, a dimer of dimers. One homotetramer interacts with 1 SecA dimer.

It is found in the cytoplasm. One of the proteins required for the normal export of preproteins out of the cell cytoplasm. It is a molecular chaperone that binds to a subset of precursor proteins, maintaining them in a translocation-competent state. It also specifically binds to its receptor SecA. The sequence is that of Protein-export protein SecB from Wolbachia sp. subsp. Brugia malayi (strain TRS).